A 156-amino-acid polypeptide reads, in one-letter code: 6,7-dimethyl-8-ribityllumazine synthase (156 aa).

Residues phenylalanine 22, 57–59 (AVE), and 81–83 (CVI) contribute to the 5-amino-6-(D-ribitylamino)uracil site. 86-87 (GT) is a (2S)-2-hydroxy-3-oxobutyl phosphate binding site. The active-site Proton donor is histidine 89. Residue phenylalanine 114 coordinates 5-amino-6-(D-ribitylamino)uracil. Arginine 128 serves as a coordination point for (2S)-2-hydroxy-3-oxobutyl phosphate.

This sequence belongs to the DMRL synthase family. Forms an icosahedral capsid composed of 60 subunits, arranged as a dodecamer of pentamers.

It catalyses the reaction (2S)-2-hydroxy-3-oxobutyl phosphate + 5-amino-6-(D-ribitylamino)uracil = 6,7-dimethyl-8-(1-D-ribityl)lumazine + phosphate + 2 H2O + H(+). The protein operates within cofactor biosynthesis; riboflavin biosynthesis; riboflavin from 2-hydroxy-3-oxobutyl phosphate and 5-amino-6-(D-ribitylamino)uracil: step 1/2. Its function is as follows. Catalyzes the formation of 6,7-dimethyl-8-ribityllumazine by condensation of 5-amino-6-(D-ribitylamino)uracil with 3,4-dihydroxy-2-butanone 4-phosphate. This is the penultimate step in the biosynthesis of riboflavin. The sequence is that of 6,7-dimethyl-8-ribityllumazine synthase from Vibrio cholerae serotype O1 (strain ATCC 39315 / El Tor Inaba N16961).